The following is a 576-amino-acid chain: Lysine--tRNA ligase (576 aa).

Mg(2+)-binding residues include E412 and E419.

This sequence belongs to the class-II aminoacyl-tRNA synthetase family. As to quaternary structure, homodimer. Mg(2+) is required as a cofactor.

It localises to the cytoplasm. It catalyses the reaction tRNA(Lys) + L-lysine + ATP = L-lysyl-tRNA(Lys) + AMP + diphosphate. This Phocaeicola vulgatus (strain ATCC 8482 / DSM 1447 / JCM 5826 / CCUG 4940 / NBRC 14291 / NCTC 11154) (Bacteroides vulgatus) protein is Lysine--tRNA ligase.